Consider the following 82-residue polypeptide: RNA-binding protein Hfq (82 aa).

Residues 11–71 (DTFLNSVRKS…ISTIMPAQPV (61 aa)) form the Sm domain.

Belongs to the Hfq family. In terms of assembly, homohexamer.

Its function is as follows. RNA chaperone that binds small regulatory RNA (sRNAs) and mRNAs to facilitate mRNA translational regulation in response to envelope stress, environmental stress and changes in metabolite concentrations. Also binds with high specificity to tRNAs. The polypeptide is RNA-binding protein Hfq (Caulobacter vibrioides (strain ATCC 19089 / CIP 103742 / CB 15) (Caulobacter crescentus)).